A 637-amino-acid polypeptide reads, in one-letter code: Chaperone protein DnaK (637 aa).

Thr203 carries the post-translational modification Phosphothreonine; by autocatalysis. The disordered stretch occupies residues 600-637 (SAVYGQQQEQGAPAQEEPSAEGKKNDDEGTVEGEFREV). Low complexity predominate over residues 604 to 616 (GQQQEQGAPAQEE). The segment covering 619–637 (AEGKKNDDEGTVEGEFREV) has biased composition (basic and acidic residues).

The protein belongs to the heat shock protein 70 family.

Acts as a chaperone. The polypeptide is Chaperone protein DnaK (Dehalococcoides mccartyi (strain ATCC BAA-2266 / KCTC 15142 / 195) (Dehalococcoides ethenogenes (strain 195))).